Here is a 169-residue protein sequence, read N- to C-terminus: Small ribosomal subunit protein uS5 (169 aa).

The region spanning 14–77 (MKEQVVDIRR…QAAKKNLLLV (64 aa)) is the S5 DRBM domain.

Belongs to the universal ribosomal protein uS5 family. Part of the 30S ribosomal subunit. Contacts proteins S4 and S8.

Functionally, with S4 and S12 plays an important role in translational accuracy. Located at the back of the 30S subunit body where it stabilizes the conformation of the head with respect to the body. This Alkaliphilus metalliredigens (strain QYMF) protein is Small ribosomal subunit protein uS5.